Here is an 827-residue protein sequence, read N- to C-terminus: SH3-containing GRB2-like protein 3-interacting protein 1 (827 aa).

Disordered stretches follow at residues 1-115 (MMEG…ESHK), 142-205 (SIGN…GPPL), and 223-278 (IWGS…QAAT). Basic and acidic residues-rich tracts occupy residues 16–32 (RKKE…DRDG) and 40–54 (PPYH…EGGK). Residues Ser-78, Ser-104, Ser-105, Ser-107, Ser-149, Ser-151, Ser-156, and Ser-169 each carry the phosphoserine modification. A phosphothreonine mark is found at Thr-180 and Thr-182. Phosphoserine is present on Ser-236. Residues 245-260 (TGTPPPLPPKAVPATP) are compositionally biased toward pro residues. Residues Thr-247 and Thr-259 each carry the phosphothreonine modification. Ser-265, Ser-287, Ser-289, Ser-300, Ser-316, and Ser-319 each carry phosphoserine. The segment covering 265–276 (SPLTVATGNDQA) has biased composition (polar residues). Residues 314-333 (HFSDASPEHVTPELTPREKV) are compositionally biased toward basic and acidic residues. A disordered region spans residues 314–523 (HFSDASPEHV…LSAATTPTVE (210 aa)). Phosphothreonine is present on residues Thr-324, Thr-328, and Thr-335. Residues 336 to 345 (PPAASDIPAD) are compositionally biased toward low complexity. Pro residues predominate over residues 346 to 369 (SPAPGPPGPPGSAGPPGPPGPRHV). At Ser-371 the chain carries Phosphoserine. Residues 377-392 (EVQKKVAEQTFIKDDY) show a composition bias toward basic and acidic residues. Ser-398 is modified (phosphoserine). A Phosphothreonine modification is found at Thr-409. Low complexity predominate over residues 436–455 (ASGASSPARPATPLVPCSST). Residues 456–474 (TPPPPPPRPPSRPKLPPGK) are compositionally biased toward pro residues. 2 stretches are compositionally biased toward low complexity: residues 481 to 491 (SRPFSPPIHSS) and 498 to 521 (PLAR…TTPT). Ser-485 is subject to Phosphoserine. The 269-residue stretch at 558–826 (TLPVAAAFTE…RFAAGKYLAD (269 aa)) folds into the MHD domain. 4 interaction with DPF motifs-containing proteins regions span residues 560-566 (PVAAAFT), 592-594 (SFP), 666-669 (TYYN), and 812-817 (SLIKKR). Positions 648-827 (MPNLMTHLKK…FAAGKYLADN (180 aa)) are necessary and sufficient to mediate interaction with CANX.

As to quaternary structure, interacts with proteins essential or regulating the formation of functional clathrin-coated pits. Interacts with CANX. Interacts with AP2A1. Interacts with EPS15. Interacts with SH3GL3. Interacts with AMPH. Interacts with ITSN1 (via SH3 domains). Interacts with and REPS1. In terms of tissue distribution, specifically expressed in brain (at protein level).

It localises to the membrane. It is found in the clathrin-coated pit. Its function is as follows. May function in clathrin-mediated endocytosis. Has both a membrane binding/tubulating activity and the ability to recruit proteins essential to the formation of functional clathrin-coated pits. Has a preference for membranes enriched in phosphatidylserine and phosphoinositides and is required for the endocytosis of the transferrin receptor. May also bind tubulin. May play a role in the regulation of energy homeostasis. The sequence is that of SH3-containing GRB2-like protein 3-interacting protein 1 (Sgip1) from Rattus norvegicus (Rat).